The following is a 342-amino-acid chain: NADH-quinone oxidoreductase subunit H (342 aa).

8 helical membrane-spanning segments follow: residues 15–35 (LLII…LMVA), 86–106 (VLFI…WAVV), 119–139 (VGVL…IIAG), 159–179 (VSYE…VGSL), 190–210 (HVWF…SGLA), 251–271 (FMIC…PFDI), 277–297 (VPGP…FFWV), and 316–336 (VFLP…ELAG).

The protein belongs to the complex I subunit 1 family. As to quaternary structure, NDH-1 is composed of 14 different subunits. Subunits NuoA, H, J, K, L, M, N constitute the membrane sector of the complex.

The protein localises to the cell inner membrane. It carries out the reaction a quinone + NADH + 5 H(+)(in) = a quinol + NAD(+) + 4 H(+)(out). Its function is as follows. NDH-1 shuttles electrons from NADH, via FMN and iron-sulfur (Fe-S) centers, to quinones in the respiratory chain. The immediate electron acceptor for the enzyme in this species is believed to be ubiquinone. Couples the redox reaction to proton translocation (for every two electrons transferred, four hydrogen ions are translocated across the cytoplasmic membrane), and thus conserves the redox energy in a proton gradient. This subunit may bind ubiquinone. The protein is NADH-quinone oxidoreductase subunit H of Granulibacter bethesdensis (strain ATCC BAA-1260 / CGDNIH1).